The following is a 213-amino-acid chain: DELTA-actitoxin-Aas1a (213 aa).

An N-terminal signal peptide occupies residues 1 to 19; that stretch reads MSRLIIAFIVVTMVCSAIA. Residues 20–34 constitute a propeptide that is removed on maturation; it reads LPKKKVEPLEKDEKR. The segment at 37–46 is plays an important role in the hemolytic activity; it reads AVAGAVIEGG. Residues 45-64 form an N-terminal region region; it reads GGNLVMSVLDRILEAIGDVN. Phosphocholine is bound by residues Ser-88, Val-121, Ser-139, Pro-141, Tyr-167, Tyr-171, and Tyr-172. The trp-rich region, which is important for the binding to lipid membrane stretch occupies residues 139–154; sequence SIPYDYNLYSNWWNVK. A Cell attachment site, crucial for protein stability motif is present at residues 178–180; that stretch reads KGD.

The protein belongs to the actinoporin family. Sea anemone subfamily. Octamer or nonamer in membranes. Monomer in the soluble state.

It localises to the secreted. The protein resides in the nematocyst. It is found in the target cell membrane. Its function is as follows. Pore-forming protein that forms cation-selective hydrophilic pores of around 1 nm and causes cytolysis. Pore formation is a multi-step process that involves specific recognition of membrane sphingomyelin (but neither cholesterol nor phosphatidylcholine) using aromatic rich region and adjacent phosphocholine (POC) binding site, firm binding to the membrane (mainly driven by hydrophobic interactions) accompanied by the transfer of the N-terminal region to the lipid-water interface and finally pore formation after oligomerization of monomers. This protein shows potent hemolytic activity (EC(50)=8.8 ng/ml) that is specifically inhibited by sphingomyelin. Shows no phospholipase A2 activity, nor antimicrobial activity against the four bacteria tested. Is lethal to crayfish. The polypeptide is DELTA-actitoxin-Aas1a (Anthopleura asiatica (Sea anemone)).